Here is a 112-residue protein sequence, read N- to C-terminus: Large ribosomal subunit protein P2A (112 aa).

A disordered region spans residues 83 to 112; sequence GAAPAAEAKKEEKVEEKEESDDDMGFSLFD. Residues 89 to 98 show a composition bias toward basic and acidic residues; that stretch reads EAKKEEKVEE.

It belongs to the eukaryotic ribosomal protein P1/P2 family. In terms of assembly, P1 and P2 exist as dimers at the large ribosomal subunit. Post-translationally, phosphorylated.

Its function is as follows. Plays an important role in the elongation step of protein synthesis. The chain is Large ribosomal subunit protein P2A (RPP2A) from Zea mays (Maize).